The chain runs to 376 residues: uncharacterized protein (376 aa).

This sequence belongs to the choline/ethanolamine kinase family.

This is an uncharacterized protein from Caenorhabditis elegans.